We begin with the raw amino-acid sequence, 90 residues long: uncharacterized protein (90 aa).

A disordered region spans residues 1-26; the sequence is MFKRSVSRLFCAPAPAPAPRKQPGGR. The stretch at 33-66 forms a coiled coil; that stretch reads NLNQSVKKQLNHLEVLERIKKQRKEQKNNRNQVD.

This is an uncharacterized protein from Dictyostelium discoideum (Social amoeba).